A 295-amino-acid polypeptide reads, in one-letter code: Nucleotide-binding protein RBAM_031990 (295 aa).

Position 16–23 (16–23) interacts with ATP; sequence GMSGAGKT. 67–70 serves as a coordination point for GTP; that stretch reads DLRG.

This sequence belongs to the RapZ-like family.

Its function is as follows. Displays ATPase and GTPase activities. In Bacillus velezensis (strain DSM 23117 / BGSC 10A6 / LMG 26770 / FZB42) (Bacillus amyloliquefaciens subsp. plantarum), this protein is Nucleotide-binding protein RBAM_031990.